The primary structure comprises 109 residues: Small ribosomal subunit protein uS10 (109 aa).

The protein belongs to the universal ribosomal protein uS10 family. As to quaternary structure, part of the 30S ribosomal subunit.

Its function is as follows. Involved in the binding of tRNA to the ribosomes. The protein is Small ribosomal subunit protein uS10 of Wolbachia pipientis wMel.